A 137-amino-acid polypeptide reads, in one-letter code: Cellular retinoic acid-binding protein 1 (137 aa).

Positions 21–31 match the Nuclear localization signal motif; the sequence is KALGVNAMLRK. 132 to 134 contacts all-trans-retinoate; that stretch reads RIY.

Belongs to the calycin superfamily. Fatty-acid binding protein (FABP) family.

It is found in the cytoplasm. Cytosolic CRABPs may regulate the access of retinoic acid to the nuclear retinoic acid receptors. The chain is Cellular retinoic acid-binding protein 1 (CRABP1) from Homo sapiens (Human).